We begin with the raw amino-acid sequence, 893 residues long: Translation initiation factor IF-2 (893 aa).

Disordered stretches follow at residues 135-169 (KAKA…KAEE) and 201-300 (ENEK…ESMD). The span at 201 to 224 (ENEKRWAEEEKARKEAEKTVDHHV) shows a compositional bias: basic and acidic residues. A compositionally biased stretch (low complexity) spans 251 to 265 (PSANAGNNANANAGA). Residues 393–562 (SRAPVVTIMG…LLEAEVLELK (170 aa)) enclose the tr-type G domain. The G1 stretch occupies residues 402-409 (GHVDHGKT). 402-409 (GHVDHGKT) contacts GTP. Residues 427 to 431 (GITQH) form a G2 region. The G3 stretch occupies residues 448–451 (DTPG). GTP contacts are provided by residues 448-452 (DTPGH) and 502-505 (NKMD). Residues 502–505 (NKMD) form a G4 region. Residues 538–540 (SAK) are G5.

The protein belongs to the TRAFAC class translation factor GTPase superfamily. Classic translation factor GTPase family. IF-2 subfamily.

The protein localises to the cytoplasm. Functionally, one of the essential components for the initiation of protein synthesis. Protects formylmethionyl-tRNA from spontaneous hydrolysis and promotes its binding to the 30S ribosomal subunits. Also involved in the hydrolysis of GTP during the formation of the 70S ribosomal complex. The chain is Translation initiation factor IF-2 from Shewanella halifaxensis (strain HAW-EB4).